Reading from the N-terminus, the 258-residue chain is Phosphoribosylaminoimidazole-succinocarboxamide synthase (258 aa).

It belongs to the SAICAR synthetase family.

The catalysed reaction is 5-amino-1-(5-phospho-D-ribosyl)imidazole-4-carboxylate + L-aspartate + ATP = (2S)-2-[5-amino-1-(5-phospho-beta-D-ribosyl)imidazole-4-carboxamido]succinate + ADP + phosphate + 2 H(+). Its pathway is purine metabolism; IMP biosynthesis via de novo pathway; 5-amino-1-(5-phospho-D-ribosyl)imidazole-4-carboxamide from 5-amino-1-(5-phospho-D-ribosyl)imidazole-4-carboxylate: step 1/2. In Maricaulis maris (strain MCS10) (Caulobacter maris), this protein is Phosphoribosylaminoimidazole-succinocarboxamide synthase.